A 123-amino-acid polypeptide reads, in one-letter code: Small ribosomal subunit protein uS12 (123 aa).

Aspartate 89 is modified (3-methylthioaspartic acid).

Belongs to the universal ribosomal protein uS12 family. As to quaternary structure, part of the 30S ribosomal subunit. Contacts proteins S8 and S17. May interact with IF1 in the 30S initiation complex.

Its function is as follows. With S4 and S5 plays an important role in translational accuracy. Interacts with and stabilizes bases of the 16S rRNA that are involved in tRNA selection in the A site and with the mRNA backbone. Located at the interface of the 30S and 50S subunits, it traverses the body of the 30S subunit contacting proteins on the other side and probably holding the rRNA structure together. The combined cluster of proteins S8, S12 and S17 appears to hold together the shoulder and platform of the 30S subunit. In Maridesulfovibrio salexigens (strain ATCC 14822 / DSM 2638 / NCIMB 8403 / VKM B-1763) (Desulfovibrio salexigens), this protein is Small ribosomal subunit protein uS12.